The chain runs to 808 residues: Sucrose synthase 2 (808 aa).

S10 is subject to Phosphoserine; by CPK. The GT-B glycosyltransferase stretch occupies residues 272-749 (MMFNVVILSP…GLQRIYEKYT (478 aa)).

The protein belongs to the glycosyltransferase 1 family. Plant sucrose synthase subfamily. Homotetramer or heterotetramer with SUS1. Phosphorylated at Ser-10 by CPK23 in developing seeds. Predominantly expressed in the leaf tissues. Expressed in seeds, and at lower levels in roots. Expressed in leaf mesophyll and phloem (at protein level).

It carries out the reaction an NDP-alpha-D-glucose + D-fructose = a ribonucleoside 5'-diphosphate + sucrose + H(+). Its activity is regulated as follows. Activated by phosphorylation at Ser-10 by CPK23. Sucrose-cleaving enzyme that provides UDP-glucose and fructose for various metabolic pathways. Functions in developing seeds by supplying substrates for the biosynthesis of storage products. The polypeptide is Sucrose synthase 2 (SUS2) (Oryza sativa subsp. japonica (Rice)).